A 333-amino-acid polypeptide reads, in one-letter code: Holliday junction branch migration complex subunit RuvB (333 aa).

Residues 1 to 182 (MEERLVSGEV…FGVISRLEYY (182 aa)) form a large ATPase domain (RuvB-L) region. ATP is bound by residues L21, R22, G63, K66, T67, T68, 129–131 (EDY), R172, Y182, and R219. T67 is a Mg(2+) binding site. Residues 183–253 (HVDQLAQIIE…LAVEALERLQ (71 aa)) form a small ATPAse domain (RuvB-S) region. The tract at residues 256-333 (RLGLDQIDHK…THLGMEVPKR (78 aa)) is head domain (RuvB-H). R311 and R316 together coordinate DNA.

Belongs to the RuvB family. Homohexamer. Forms an RuvA(8)-RuvB(12)-Holliday junction (HJ) complex. HJ DNA is sandwiched between 2 RuvA tetramers; dsDNA enters through RuvA and exits via RuvB. An RuvB hexamer assembles on each DNA strand where it exits the tetramer. Each RuvB hexamer is contacted by two RuvA subunits (via domain III) on 2 adjacent RuvB subunits; this complex drives branch migration. In the full resolvosome a probable DNA-RuvA(4)-RuvB(12)-RuvC(2) complex forms which resolves the HJ.

It localises to the cytoplasm. It catalyses the reaction ATP + H2O = ADP + phosphate + H(+). Functionally, the RuvA-RuvB-RuvC complex processes Holliday junction (HJ) DNA during genetic recombination and DNA repair, while the RuvA-RuvB complex plays an important role in the rescue of blocked DNA replication forks via replication fork reversal (RFR). RuvA specifically binds to HJ cruciform DNA, conferring on it an open structure. The RuvB hexamer acts as an ATP-dependent pump, pulling dsDNA into and through the RuvAB complex. RuvB forms 2 homohexamers on either side of HJ DNA bound by 1 or 2 RuvA tetramers; 4 subunits per hexamer contact DNA at a time. Coordinated motions by a converter formed by DNA-disengaged RuvB subunits stimulates ATP hydrolysis and nucleotide exchange. Immobilization of the converter enables RuvB to convert the ATP-contained energy into a lever motion, pulling 2 nucleotides of DNA out of the RuvA tetramer per ATP hydrolyzed, thus driving DNA branch migration. The RuvB motors rotate together with the DNA substrate, which together with the progressing nucleotide cycle form the mechanistic basis for DNA recombination by continuous HJ branch migration. Branch migration allows RuvC to scan DNA until it finds its consensus sequence, where it cleaves and resolves cruciform DNA. The protein is Holliday junction branch migration complex subunit RuvB of Geobacillus kaustophilus (strain HTA426).